The following is a 400-amino-acid chain: Enoyl-[acyl-carrier-protein] reductase [NADH] (400 aa).

Residues Gly48–Tyr53, Phe74–Glu75, Asp111–Ala112, and Leu139–Ala140 contribute to the NAD(+) site. Substrate is bound at residue Tyr225. Tyr235 acts as the Proton donor in catalysis. Residues Lys244 and Val273–Thr275 each bind NAD(+).

This sequence belongs to the TER reductase family. As to quaternary structure, monomer.

The catalysed reaction is a 2,3-saturated acyl-[ACP] + NAD(+) = a (2E)-enoyl-[ACP] + NADH + H(+). Its pathway is lipid metabolism; fatty acid biosynthesis. Functionally, involved in the final reduction of the elongation cycle of fatty acid synthesis (FAS II). Catalyzes the reduction of a carbon-carbon double bond in an enoyl moiety that is covalently linked to an acyl carrier protein (ACP). The protein is Enoyl-[acyl-carrier-protein] reductase [NADH] of Aliivibrio fischeri (strain MJ11) (Vibrio fischeri).